Here is a 369-residue protein sequence, read N- to C-terminus: tRNA pseudouridine synthase D (369 aa).

Asp-80 functions as the Nucleophile in the catalytic mechanism. The TRUD domain maps to 156–318 (GIPNWFGEQR…LKQERRALRL (163 aa)).

Belongs to the pseudouridine synthase TruD family.

The catalysed reaction is uridine(13) in tRNA = pseudouridine(13) in tRNA. Its function is as follows. Responsible for synthesis of pseudouridine from uracil-13 in transfer RNAs. This Xanthomonas axonopodis pv. citri (strain 306) protein is tRNA pseudouridine synthase D.